The sequence spans 92 residues: Small ribosomal subunit protein uS19 (92 aa).

Belongs to the universal ribosomal protein uS19 family.

Functionally, protein S19 forms a complex with S13 that binds strongly to the 16S ribosomal RNA. This chain is Small ribosomal subunit protein uS19, found in Limosilactobacillus reuteri (strain DSM 20016) (Lactobacillus reuteri).